Consider the following 162-residue polypeptide: CASP-like protein 0U1 (162 aa).

Topologically, residues Met1–Arg11 are cytoplasmic. A helical membrane pass occupies residues Phe12–Tyr32. Over Leu33–Tyr43 the chain is Extracellular. Residues Leu44–Cys64 traverse the membrane as a helical segment. The Cytoplasmic segment spans residues Gly65–Pro69. The chain crosses the membrane as a helical span at residues Pro70–Val90. The Extracellular segment spans residues Thr91–Ala123. Asn96 carries an N-linked (GlcNAc...) asparagine glycan. Residues Ala124 to Phe144 traverse the membrane as a helical segment. Residues Arg145–Val162 are Cytoplasmic-facing.

This sequence belongs to the Casparian strip membrane proteins (CASP) family. In terms of assembly, homodimer and heterodimers.

It localises to the cell membrane. In Chlorokybus atmophyticus (Soil alga), this protein is CASP-like protein 0U1.